Consider the following 362-residue polypeptide: Phosphoserine aminotransferase (362 aa).

The L-glutamate site is built by serine 9 and arginine 42. Pyridoxal 5'-phosphate contacts are provided by residues 76–77 (GR), tryptophan 102, threonine 153, aspartate 174, and glutamine 197. Residue lysine 198 is modified to N6-(pyridoxal phosphate)lysine. 239 to 240 (NT) provides a ligand contact to pyridoxal 5'-phosphate.

This sequence belongs to the class-V pyridoxal-phosphate-dependent aminotransferase family. SerC subfamily. In terms of assembly, homodimer. It depends on pyridoxal 5'-phosphate as a cofactor.

The protein localises to the cytoplasm. It carries out the reaction O-phospho-L-serine + 2-oxoglutarate = 3-phosphooxypyruvate + L-glutamate. The catalysed reaction is 4-(phosphooxy)-L-threonine + 2-oxoglutarate = (R)-3-hydroxy-2-oxo-4-phosphooxybutanoate + L-glutamate. It participates in amino-acid biosynthesis; L-serine biosynthesis; L-serine from 3-phospho-D-glycerate: step 2/3. Its pathway is cofactor biosynthesis; pyridoxine 5'-phosphate biosynthesis; pyridoxine 5'-phosphate from D-erythrose 4-phosphate: step 3/5. In terms of biological role, catalyzes the reversible conversion of 3-phosphohydroxypyruvate to phosphoserine and of 3-hydroxy-2-oxo-4-phosphonooxybutanoate to phosphohydroxythreonine. This chain is Phosphoserine aminotransferase, found in Shigella boydii serotype 4 (strain Sb227).